The sequence spans 208 residues: Methyl-CpG-binding domain protein 3-like 3 (208 aa).

Belongs to the MBD3L family.

The sequence is that of Methyl-CpG-binding domain protein 3-like 3 (MBD3L3) from Homo sapiens (Human).